Here is a 172-residue protein sequence, read N- to C-terminus: Adenine phosphoribosyltransferase (172 aa).

Belongs to the purine/pyrimidine phosphoribosyltransferase family. In terms of assembly, homodimer.

The protein localises to the cytoplasm. It catalyses the reaction AMP + diphosphate = 5-phospho-alpha-D-ribose 1-diphosphate + adenine. It participates in purine metabolism; AMP biosynthesis via salvage pathway; AMP from adenine: step 1/1. Functionally, catalyzes a salvage reaction resulting in the formation of AMP, that is energically less costly than de novo synthesis. This chain is Adenine phosphoribosyltransferase, found in Clostridium acetobutylicum (strain ATCC 824 / DSM 792 / JCM 1419 / IAM 19013 / LMG 5710 / NBRC 13948 / NRRL B-527 / VKM B-1787 / 2291 / W).